An 819-amino-acid polypeptide reads, in one-letter code: MENPPLESEIKEDMSLKNHPPDKDKDKDTIMEQPSSPRHRKVVARWLPDEAQRPIINDAPVFTPSLEEFVDPLAYIEKIRPLAEPYGICRIIPPSTWKPPCRLKEKSIWEQTKFPTRIQTVDLLQNREPMKKKPKSRKRKRRRNSRMGSSKRRSGSSPAESTSSPEAEEKFGFNSGSDFTLDEFEKYALHFKDSYFEKKDSGGDIVKWTPSVDDIEGEYWRIVEQPTDEVEVYYGADLENGVLGSGFYKRAEKFTGSDMEQYTLSGWNLNNLPRLPGSVLSFEDCDISGVLVPWLYVGMCFSSFCWHVEDHHLYSLNYHHFGEPKVWYGVPGSNATALEKAMRKHLPDLFEEQPDLLHGLVTQFSPSILKDEGVQAYRVVQNSGEYVLTFPRAYHAGFNCGFNCAEAVNVAPVDWLAHGQNAVELYSKETRKTSLSHDKLLLGAAYEAVKALWELSASEGKENTTNLRWKSFCGKNGTLTNAIQARLQMEEGRITALGRDSSSLKKMEKDFDSNCERECFSCFYDLHLSASGCKCSPEEYACLKHADDLCSCDVKDGFILLRYTMDELSSLVRALEGESDDLKIWASKVLGIEHSDEDQTKTSSVISEEKKLKEGSFDLNIDLEMDYQEDVKEEASTSGGELTASENLGVSVEPINLGFLIFGKLWCNKYAIFPKGFRSRVKFYNVLDPTRMSNYISEVLDAGLMGPLFRVTLEESPDESFFNVSAQQCWEMVMRRVKDTSTSLGLPILPQFESINGLQMFGFLSPSIVQAIEALDPNHRLVEYWNHKNQTSSDSKDHFISSNCSASLTKGKLFGVDLM.

The segment at 1 to 39 (MENPPLESEIKEDMSLKNHPPDKDKDKDTIMEQPSSPRH) is disordered. The segment covering 8–30 (SEIKEDMSLKNHPPDKDKDKDTI) has biased composition (basic and acidic residues). Residues 59 to 100 (APVFTPSLEEFVDPLAYIEKIRPLAEPYGICRIIPPSTWKPP) enclose the JmjN domain. Positions 120-171 (TVDLLQNREPMKKKPKSRKRKRRRNSRMGSSKRRSGSSPAESTSSPEAEEKF) are disordered. Residues 130-137 (MKKKPKSR) carry the Nuclear localization signal motif. Basic residues predominate over residues 130-154 (MKKKPKSRKRKRRRNSRMGSSKRRS). Residues 155-165 (GSSPAESTSSP) are compositionally biased toward low complexity. One can recognise a JmjC domain in the interval 261 to 427 (QYTLSGWNLN…HGQNAVELYS (167 aa)). Residues H307, E309, and H395 each coordinate Fe cation. C519, C522, C533, C535, C542, H545, C550, and C552 together coordinate Zn(2+). A C5HC2 zinc finger spans residues 519–571 (CFSCFYDLHLSASGCKCSPEEYACLKHADDLCSCDVKDGFILLRYTMDELSSL). An FYR N-terminal domain is found at 644–702 (ASENLGVSVEPINLGFLIFGKLWCNKYAIFPKGFRSRVKFYNVLDPTRMSNYISEVLDA). The FYR C-terminal domain occupies 704-788 (LMGPLFRVTL…HRLVEYWNHK (85 aa)).

The protein belongs to the JARID1 histone demethylase family. It depends on Fe(2+) as a cofactor. As to expression, expressed in vascular tissues of roots, cotyledons, leaves and flowers. Expressed predominantly in phloem companion cells of roots. Present in inflorescences, roots, siliques, leaves and stems.

Its subcellular location is the nucleus. The catalysed reaction is N(6),N(6),N(6)-trimethyl-L-lysyl(4)-[histone H3] + 2-oxoglutarate + O2 = N(6),N(6)-dimethyl-L-lysyl(4)-[histone H3] + formaldehyde + succinate + CO2. It catalyses the reaction N(6),N(6)-dimethyl-L-lysyl(4)-[histone H3] + 2-oxoglutarate + O2 = N(6)-methyl-L-lysyl(4)-[histone H3] + formaldehyde + succinate + CO2. Histone demethylase that demethylates 'Lys-4' (H3K4me) of histone H3 with a specific activity for H3K4me3 and H3K4me2. No activity on H3K9me3/2, H3K27me3/2 and H3K36me3/2. Involved in the control of flowering time by demethylating H3K4me3 at the FLC locus and repressing its expression. The repression of FLC level and reduction in H3K4me3 at the FLC locus results in induction of the flowering activator FT, which is a downstream target of FLC. This is Lysine-specific demethylase JMJ18 from Arabidopsis thaliana (Mouse-ear cress).